A 345-amino-acid polypeptide reads, in one-letter code: S-adenosylmethionine:tRNA ribosyltransferase-isomerase (345 aa).

This sequence belongs to the QueA family. In terms of assembly, monomer.

Its subcellular location is the cytoplasm. It catalyses the reaction 7-aminomethyl-7-carbaguanosine(34) in tRNA + S-adenosyl-L-methionine = epoxyqueuosine(34) in tRNA + adenine + L-methionine + 2 H(+). It participates in tRNA modification; tRNA-queuosine biosynthesis. Its function is as follows. Transfers and isomerizes the ribose moiety from AdoMet to the 7-aminomethyl group of 7-deazaguanine (preQ1-tRNA) to give epoxyqueuosine (oQ-tRNA). In Shewanella sp. (strain MR-4), this protein is S-adenosylmethionine:tRNA ribosyltransferase-isomerase.